The primary structure comprises 200 residues: dITP/XTP pyrophosphatase (200 aa).

S7–K12 contributes to the substrate binding site. D68 (proton acceptor) is an active-site residue. D68 serves as a coordination point for Mg(2+). Residues A69, F154 to D157, K177, and H182 to R183 contribute to the substrate site.

Belongs to the HAM1 NTPase family. Homodimer. Mg(2+) is required as a cofactor.

It carries out the reaction XTP + H2O = XMP + diphosphate + H(+). The catalysed reaction is dITP + H2O = dIMP + diphosphate + H(+). The enzyme catalyses ITP + H2O = IMP + diphosphate + H(+). In terms of biological role, pyrophosphatase that catalyzes the hydrolysis of nucleoside triphosphates to their monophosphate derivatives, with a high preference for the non-canonical purine nucleotides XTP (xanthosine triphosphate), dITP (deoxyinosine triphosphate) and ITP. Seems to function as a house-cleaning enzyme that removes non-canonical purine nucleotides from the nucleotide pool, thus preventing their incorporation into DNA/RNA and avoiding chromosomal lesions. The protein is dITP/XTP pyrophosphatase of Delftia acidovorans (strain DSM 14801 / SPH-1).